The primary structure comprises 53 residues: Small, acid-soluble spore protein K (53 aa).

Positions 1–53 (MRNKERNFPNQNNNKFEGEPRAKAEYASKRANGTTNTHPQERMHASGKRDDNF) are disordered. 2 stretches are compositionally biased toward basic and acidic residues: residues 16 to 28 (FEGE…EYAS) and 39 to 53 (PQER…DDNF).

Belongs to the SspK family.

It localises to the spore core. This is Small, acid-soluble spore protein K from Geobacillus sp. (strain WCH70).